A 462-amino-acid chain; its full sequence is UDP-N-acetylmuramate--L-alanine ligase (462 aa).

ATP is bound at residue 114–120; sequence GSHGKTT.

It belongs to the MurCDEF family.

It is found in the cytoplasm. It catalyses the reaction UDP-N-acetyl-alpha-D-muramate + L-alanine + ATP = UDP-N-acetyl-alpha-D-muramoyl-L-alanine + ADP + phosphate + H(+). It participates in cell wall biogenesis; peptidoglycan biosynthesis. Its function is as follows. Cell wall formation. The protein is UDP-N-acetylmuramate--L-alanine ligase of Brachyspira hyodysenteriae (strain ATCC 49526 / WA1).